The primary structure comprises 366 residues: Aminomethyltransferase (366 aa).

This sequence belongs to the GcvT family. The glycine cleavage system is composed of four proteins: P, T, L and H.

The enzyme catalyses N(6)-[(R)-S(8)-aminomethyldihydrolipoyl]-L-lysyl-[protein] + (6S)-5,6,7,8-tetrahydrofolate = N(6)-[(R)-dihydrolipoyl]-L-lysyl-[protein] + (6R)-5,10-methylene-5,6,7,8-tetrahydrofolate + NH4(+). The glycine cleavage system catalyzes the degradation of glycine. The polypeptide is Aminomethyltransferase (Bacillus cereus (strain B4264)).